A 359-amino-acid polypeptide reads, in one-letter code: Uroporphyrinogen decarboxylase (359 aa).

Residues 36-40, Asp-85, Tyr-160, Ser-215, and His-338 each bind substrate; that span reads RQAGR.

This sequence belongs to the uroporphyrinogen decarboxylase family. Homodimer.

It is found in the cytoplasm. The enzyme catalyses uroporphyrinogen III + 4 H(+) = coproporphyrinogen III + 4 CO2. It participates in porphyrin-containing compound metabolism; protoporphyrin-IX biosynthesis; coproporphyrinogen-III from 5-aminolevulinate: step 4/4. Functionally, catalyzes the decarboxylation of four acetate groups of uroporphyrinogen-III to yield coproporphyrinogen-III. This Corynebacterium efficiens (strain DSM 44549 / YS-314 / AJ 12310 / JCM 11189 / NBRC 100395) protein is Uroporphyrinogen decarboxylase.